We begin with the raw amino-acid sequence, 199 residues long: 7-methyl-GTP pyrophosphatase (199 aa).

The active-site Proton acceptor is the Asp-76.

The protein belongs to the Maf family. YceF subfamily. A divalent metal cation serves as cofactor.

The protein localises to the cytoplasm. It catalyses the reaction N(7)-methyl-GTP + H2O = N(7)-methyl-GMP + diphosphate + H(+). In terms of biological role, nucleoside triphosphate pyrophosphatase that hydrolyzes 7-methyl-GTP (m(7)GTP). May have a dual role in cell division arrest and in preventing the incorporation of modified nucleotides into cellular nucleic acids. The protein is 7-methyl-GTP pyrophosphatase of Rhizobium etli (strain ATCC 51251 / DSM 11541 / JCM 21823 / NBRC 15573 / CFN 42).